The following is a 288-amino-acid chain: MKNVLSIQSHVVYGFAGNKSATFPMQLLGVDVWALNTVQFSNHTQYGKWTGMVIPQEQIREIVTGLDNIEKLQECDALLSGYLGSAEQVDQILFALEQIKLRNPNALYLCDPVMPHPKKSCVVANGVCEALIEKAIPVADIMTPNLHELRQLTEFPINTFDDVLKAVNALIAKGVKKVLVKHLGSAGKINDPDTFEIIMATPEGVWHLSRPLYQFNFEPVGVGDLIAGTFLANLLNGKSDVEAFEAMNNEVAGVMKTTFELGSYELQTIAARFEILNPSSNYKAEKVA.

Residues S9 and 44-45 contribute to the substrate site; that span reads TQ. The ATP site is built by D111, E148, and K181. D224 is a substrate binding site.

Belongs to the pyridoxine kinase family. PdxY subfamily. Homodimer. It depends on Mg(2+) as a cofactor.

The catalysed reaction is pyridoxal + ATP = pyridoxal 5'-phosphate + ADP + H(+). Its pathway is cofactor metabolism; pyridoxal 5'-phosphate salvage; pyridoxal 5'-phosphate from pyridoxal: step 1/1. In terms of biological role, pyridoxal kinase involved in the salvage pathway of pyridoxal 5'-phosphate (PLP). Catalyzes the phosphorylation of pyridoxal to PLP. This chain is Pyridoxal kinase PdxY, found in Haemophilus influenzae (strain PittEE).